The following is a 108-amino-acid chain: uncharacterized protein (108 aa).

The next 3 helical transmembrane spans lie at 36 to 56 (LAIMFITFVFLLQVNGTDKMI), 58 to 78 (FIFVFTGTVIGVTYSVCKLLF), and 88 to 108 (IVFLIIFVCLFVWGIITFFNL).

It is found in the cell membrane. This is an uncharacterized protein from Alkalihalophilus pseudofirmus (strain ATCC BAA-2126 / JCM 17055 / OF4) (Bacillus pseudofirmus).